Reading from the N-terminus, the 444-residue chain is Methylenetetrahydrofolate--tRNA-(uracil-5-)-methyltransferase TrmFO (444 aa).

FAD is bound at residue 10–15; it reads GAGLAG.

It belongs to the MnmG family. TrmFO subfamily. FAD serves as cofactor.

It is found in the cytoplasm. The catalysed reaction is uridine(54) in tRNA + (6R)-5,10-methylene-5,6,7,8-tetrahydrofolate + NADH + H(+) = 5-methyluridine(54) in tRNA + (6S)-5,6,7,8-tetrahydrofolate + NAD(+). It catalyses the reaction uridine(54) in tRNA + (6R)-5,10-methylene-5,6,7,8-tetrahydrofolate + NADPH + H(+) = 5-methyluridine(54) in tRNA + (6S)-5,6,7,8-tetrahydrofolate + NADP(+). Functionally, catalyzes the folate-dependent formation of 5-methyl-uridine at position 54 (M-5-U54) in all tRNAs. The chain is Methylenetetrahydrofolate--tRNA-(uracil-5-)-methyltransferase TrmFO from Streptococcus sanguinis (strain SK36).